A 339-amino-acid chain; its full sequence is NADH-quinone oxidoreductase subunit H (339 aa).

8 helical membrane-spanning segments follow: residues 7-27, 77-97, 112-132, 149-169, 180-200, 235-255, 276-296, and 315-335; these read LFWITLKIMALVVPLMLAVAY, VLFVIAPLLAIMPALAAWAVI, LLYILAMTSLGVYGIIIAGWA, VVSYEIAMGFALVGVLMAAGS, AGGIFHWFWLPLLPLFLVYWI, VFFLAEYANMILISAVAAVMF, VPGVVWFMLKTAFFMFCYLWF, and VLIPVTVVWLIVLTIFIVTGF.

Belongs to the complex I subunit 1 family. As to quaternary structure, NDH-1 is composed of 14 different subunits. Subunits NuoA, H, J, K, L, M, N constitute the membrane sector of the complex.

The protein localises to the cell inner membrane. The enzyme catalyses a quinone + NADH + 5 H(+)(in) = a quinol + NAD(+) + 4 H(+)(out). In terms of biological role, NDH-1 shuttles electrons from NADH, via FMN and iron-sulfur (Fe-S) centers, to quinones in the respiratory chain. The immediate electron acceptor for the enzyme in this species is believed to be ubiquinone. Couples the redox reaction to proton translocation (for every two electrons transferred, four hydrogen ions are translocated across the cytoplasmic membrane), and thus conserves the redox energy in a proton gradient. This subunit may bind ubiquinone. This is NADH-quinone oxidoreductase subunit H from Alkalilimnicola ehrlichii (strain ATCC BAA-1101 / DSM 17681 / MLHE-1).